A 243-amino-acid polypeptide reads, in one-letter code: Peptidyl-tRNA hydrolase (243 aa).

Tyr14 is a tRNA binding site. The active-site Proton acceptor is the His19. Positions 64, 66, and 112 each coordinate tRNA. Basic and acidic residues predominate over residues 190–205 (KAEEEKPAKEMKDAGK). The disordered stretch occupies residues 190–243 (KAEEEKPAKEMKDAGKKPASQSHIHQARNHNQPKLPATGPMADMLKKMFGKKGD). Polar residues predominate over residues 208 to 221 (ASQSHIHQARNHNQ).

The protein belongs to the PTH family. As to quaternary structure, monomer.

Its subcellular location is the cytoplasm. It catalyses the reaction an N-acyl-L-alpha-aminoacyl-tRNA + H2O = an N-acyl-L-amino acid + a tRNA + H(+). Functionally, hydrolyzes ribosome-free peptidyl-tRNAs (with 1 or more amino acids incorporated), which drop off the ribosome during protein synthesis, or as a result of ribosome stalling. Catalyzes the release of premature peptidyl moieties from peptidyl-tRNA molecules trapped in stalled 50S ribosomal subunits, and thus maintains levels of free tRNAs and 50S ribosomes. This is Peptidyl-tRNA hydrolase from Rhizobium johnstonii (strain DSM 114642 / LMG 32736 / 3841) (Rhizobium leguminosarum bv. viciae).